The chain runs to 160 residues: NADH-quinone oxidoreductase subunit B (160 aa).

4 residues coordinate [4Fe-4S] cluster: cysteine 37, cysteine 38, cysteine 102, and cysteine 132.

It belongs to the complex I 20 kDa subunit family. In terms of assembly, NDH-1 is composed of 14 different subunits. Subunits NuoB, C, D, E, F, and G constitute the peripheral sector of the complex. The cofactor is [4Fe-4S] cluster.

The protein localises to the cell inner membrane. The catalysed reaction is a quinone + NADH + 5 H(+)(in) = a quinol + NAD(+) + 4 H(+)(out). Functionally, NDH-1 shuttles electrons from NADH, via FMN and iron-sulfur (Fe-S) centers, to quinones in the respiratory chain. Couples the redox reaction to proton translocation (for every two electrons transferred, four hydrogen ions are translocated across the cytoplasmic membrane), and thus conserves the redox energy in a proton gradient. The sequence is that of NADH-quinone oxidoreductase subunit B from Neisseria gonorrhoeae (strain NCCP11945).